The sequence spans 387 residues: Probable serine/threonine-protein kinase RIO1 homolog (387 aa).

In terms of domain architecture, Protein kinase spans 41–387 (VNLQGSLCTG…RYIGMKKRKN (347 aa)). Residue Lys-91 participates in ATP binding. Asp-204 (proton acceptor) is an active-site residue. Mg(2+) contacts are provided by Asn-209 and Asp-221. Residue Asp-221 is the 4-aspartylphosphate intermediate of the active site. The disordered stretch occupies residues 309–372 (EFGSTTDSDL…RASRISKKEK (64 aa)). The span at 312 to 321 (STTDSDLSST) shows a compositional bias: low complexity. A compositionally biased stretch (basic residues) spans 361–372 (IRRASRISKKEK).

This sequence belongs to the protein kinase superfamily. RIO-type Ser/Thr kinase family. Mg(2+) serves as cofactor.

The protein resides in the cytoplasm. The enzyme catalyses L-seryl-[protein] + ATP = O-phospho-L-seryl-[protein] + ADP + H(+). The catalysed reaction is L-threonyl-[protein] + ATP = O-phospho-L-threonyl-[protein] + ADP + H(+). It catalyses the reaction ATP + H2O = ADP + phosphate + H(+). Required for the final endonucleolytic cleavage at site D converting 20S pre-rRNA into the mature 18S rRNA. Required for the final steps of cytoplasmic maturation of the 40S ribosomal subunit. Despite the protein kinase domain is proposed to act predominantly as an ATPase. Has a role in the cell cycle where it is required for entrance into S-phase and in the control of the onset of anaphase. Appears to also be involved in the maintenance of chromosome stability and correct mitotic segregation. The protein is Probable serine/threonine-protein kinase RIO1 homolog (RIO1) of Encephalitozoon cuniculi (strain GB-M1) (Microsporidian parasite).